Reading from the N-terminus, the 103-residue chain is Co-chaperonin GroES (103 aa).

This sequence belongs to the GroES chaperonin family. As to quaternary structure, heptamer of 7 subunits arranged in a ring. Interacts with the chaperonin GroEL.

It localises to the cytoplasm. In terms of biological role, together with the chaperonin GroEL, plays an essential role in assisting protein folding. The GroEL-GroES system forms a nano-cage that allows encapsulation of the non-native substrate proteins and provides a physical environment optimized to promote and accelerate protein folding. GroES binds to the apical surface of the GroEL ring, thereby capping the opening of the GroEL channel. The chain is Co-chaperonin GroES from Prochlorococcus marinus (strain MIT 9312).